The following is a 77-amino-acid chain: NADH-ubiquinone oxidoreductase chain 4L (77 aa).

Helical transmembrane passes span 18–38 and 44–64; these read LMFILISLEFIVMSLFILFSG and MFFYFMCFSVVSSVLGMVVMV.

This sequence belongs to the complex I subunit 4L family.

Its subcellular location is the mitochondrion membrane. It catalyses the reaction a ubiquinone + NADH + 5 H(+)(in) = a ubiquinol + NAD(+) + 4 H(+)(out). Its function is as follows. Core subunit of the mitochondrial membrane respiratory chain NADH dehydrogenase (Complex I) that is believed to belong to the minimal assembly required for catalysis. Complex I functions in the transfer of electrons from NADH to the respiratory chain. The immediate electron acceptor for the enzyme is believed to be ubiquinone. The chain is NADH-ubiquinone oxidoreductase chain 4L (ND4L) from Ascaris suum (Pig roundworm).